The sequence spans 339 residues: Phomopsene synthase (339 aa).

Mg(2+) is bound by residues Asp89, Asp94, Asn224, Ser228, and Glu232.

It belongs to the terpene synthase family. Mg(2+) is required as a cofactor.

It carries out the reaction (2E,6E,10E)-geranylgeranyl diphosphate = phomopsene + diphosphate. The catalysed reaction is (2E,6E,10E)-geranylgeranyl diphosphate = allokutznerene + diphosphate. It participates in secondary metabolite biosynthesis; terpenoid biosynthesis. Functionally, diterpene synthase that catalyzes the conversion of geranylgeranyl diphosphate (GGPP) to phomopsene, a diterpene previously reported from the fungus P.amygdali. Phomopsene is the main product, but the enzyme can also produce allokutznerene (about 50% of phomopsene production activity) and traces of spiroviolene. Cannot use geranyl diphosphate (GPP), farnesyl diphosphate (FPP) and geranylfarnesyl diphosphate (GFPP). In Allokutzneria albata (Kibdelosporangium albatum), this protein is Phomopsene synthase.